Consider the following 265-residue polypeptide: MQEYTNHSDTTFALRNISFRVPGRTLLHPLSLTFPAGKVTGLIGHNGSGKSTLLKMLGRHQPPSEGEILLDAQPLESWSSKAFARKVAYLPQQLPPAEGMTVRELVAIGRYPWHGALGRFGAADREKVEEAISLVGLKPLAHRLVDSLSGGERQRAWIAMLVAQDSRCLLLDEPTSALDIAHQVDVLSLVHRLSQERGLTVIAVLHDINMAARYCDYLVALRGGEMIAQGTPAEIMRGETLEMIYGIPMGILPHPAGAAPVSFVY.

The ABC transporter domain occupies 12–248 (FALRNISFRV…ETLEMIYGIP (237 aa)). ATP is bound by residues 44-51 (GHNGSGKS) and 168-179 (CLLLDEPTSALD).

This sequence belongs to the ABC transporter superfamily. Iron (Fe3+)-hydroxamate importer (TC 3.A.1.14.7) family. In terms of assembly, the complex is composed of two ATP-binding proteins (FhuC), a transmembrane protein (FhuB) and a solute-binding protein (FhuD). FhuC interacts with FhuB.

It is found in the cell inner membrane. It catalyses the reaction ATP + H2O + Fe(3+)-hydroxamate complex-[hydroxamate-binding protein]Side 1 = ADP + phosphate + Fe(3+)-hydroxamate complexSide 2 + [hydroxamate-binding protein]Side 1.. ATPase activity is inhibited by vanadate. Functionally, part of the ABC transporter complex FhuCDB involved in iron(3+)-hydroxamate import. Responsible for energy coupling to the transport system. The chain is Iron(3+)-hydroxamate import ATP-binding protein FhuC (fhuC) from Escherichia coli (strain K12).